A 530-amino-acid polypeptide reads, in one-letter code: MSINHFNNNKNNNNKNNKNNEENFWDNTQCNNDRNKFSIDNIINSNYPTANTTTITSTTNQTIQNNVLNSINIKNNESLKNIYYDENLQRKLTSINFLKNLCSVRDQPFNFNEHIKSIQSINSYRKCISNEIFKKNLINNQLSDILIIIEITSFIGDCIFEIFYLNYFQETLEKDILLFSNASETICIPSHHSPSPQFPVYYTENINNATPSTVVSNSPNNYSQPISPQSSQSTTPTIISSNSPLKTRNKNNNNNYNNNNNNNNNNNNNNNNNNNNSNNNNNNNNYFNNNKKNKIGDCNSNNSNNNNNNNHNNNNNNNNYNYNNNNNNNNNNNNNNNNNNNNNNNNNNNNNNNNNNNNNSNNNKNNNNINNNNNNNNNNNNNINNNNNNNSINNIINNNNNFNNNNINNNLFNNNSMNYNKKENYNWESSSSEEDNNNLIKEQSVKKNETVKKQYIPRKSKYVNYERIKKVSLSKSVEPFDTMKRMEKKKPGNCSMCNIKESISWIKTMVNGQLCNACGLKAIRQIKIEN.

Disordered regions lie at residues methionine 1–asparagine 27 and serine 212–asparagine 386. Composition is skewed to low complexity over residues asparagine 7–asparagine 17, serine 216–asparagine 290, and asparagine 299–asparagine 386. A GATA-type zinc finger spans residues cysteine 494–cysteine 518.

The chain is GATA zinc finger domain-containing protein 4 (gtaD) from Dictyostelium discoideum (Social amoeba).